A 377-amino-acid polypeptide reads, in one-letter code: Ipis-1 (377 aa).

Residues asparagine 11 and asparagine 226 are each glycosylated (N-linked (GlcNAc...) asparagine).

The protein belongs to the serpin family. In terms of tissue distribution, female salivary gland. Not detected in midgut and other tissues.

It is found in the secreted. Functionally, salivary protein with immunosuppressive properties that can modulate blood feeding of ticks on vertebrate species. Inhibits proliferation of bovine peripheral blood mononuclear cells (PBMCs). Inhibits IFN-gamma (IFNG) production by bovine PBMCs. In Ixodes persulcatus (Taiga tick), this protein is Ipis-1.